The chain runs to 128 residues: Ribonuclease P protein component (128 aa).

This sequence belongs to the RnpA family. In terms of assembly, consists of a catalytic RNA component (M1 or rnpB) and a protein subunit.

The enzyme catalyses Endonucleolytic cleavage of RNA, removing 5'-extranucleotides from tRNA precursor.. Functionally, RNaseP catalyzes the removal of the 5'-leader sequence from pre-tRNA to produce the mature 5'-terminus. It can also cleave other RNA substrates such as 4.5S RNA. The protein component plays an auxiliary but essential role in vivo by binding to the 5'-leader sequence and broadening the substrate specificity of the ribozyme. The protein is Ribonuclease P protein component of Methylococcus capsulatus (strain ATCC 33009 / NCIMB 11132 / Bath).